The primary structure comprises 200 residues: Small ribosomal subunit protein uS4 (200 aa).

The interval 22–42 is disordered; it reads TGKELEKRPYAPGPHGPNQRK. In terms of domain architecture, S4 RNA-binding spans 92-152; the sequence is ARLDNLVYRM…EKSNNLVVVK (61 aa).

It belongs to the universal ribosomal protein uS4 family. Part of the 30S ribosomal subunit. Contacts protein S5. The interaction surface between S4 and S5 is involved in control of translational fidelity.

Functionally, one of the primary rRNA binding proteins, it binds directly to 16S rRNA where it nucleates assembly of the body of the 30S subunit. With S5 and S12 plays an important role in translational accuracy. The chain is Small ribosomal subunit protein uS4 from Bacillus cereus (strain Q1).